Here is a 315-residue protein sequence, read N- to C-terminus: Phosphatidylglycerol--prolipoprotein diacylglyceryl transferase (315 aa).

The next 2 helical transmembrane spans lie at 19–39 (FTIH…VWIL) and 93–113 (VWEG…VAFL). An a 1,2-diacyl-sn-glycero-3-phospho-(1'-sn-glycerol)-binding site is contributed by Arg-141. 2 helical membrane passes run 188 to 208 (LFHP…ALII) and 256 to 276 (MWTA…LYQY).

It belongs to the Lgt family.

The protein localises to the cell membrane. The enzyme catalyses L-cysteinyl-[prolipoprotein] + a 1,2-diacyl-sn-glycero-3-phospho-(1'-sn-glycerol) = an S-1,2-diacyl-sn-glyceryl-L-cysteinyl-[prolipoprotein] + sn-glycerol 1-phosphate + H(+). Its pathway is protein modification; lipoprotein biosynthesis (diacylglyceryl transfer). Functionally, catalyzes the transfer of the diacylglyceryl group from phosphatidylglycerol to the sulfhydryl group of the N-terminal cysteine of a prolipoprotein, the first step in the formation of mature lipoproteins. In Bifidobacterium longum subsp. infantis (strain ATCC 15697 / DSM 20088 / JCM 1222 / NCTC 11817 / S12), this protein is Phosphatidylglycerol--prolipoprotein diacylglyceryl transferase.